Here is a 486-residue protein sequence, read N- to C-terminus: Glutamate--tRNA ligase (486 aa).

A 'HIGH' region motif is present at residues 11–21 (PSPTGVVHIGN). Residues 255-259 (KLSKR) carry the 'KMSKS' region motif. Lys258 is a binding site for ATP.

It belongs to the class-I aminoacyl-tRNA synthetase family. Glutamate--tRNA ligase type 1 subfamily. Monomer.

The protein localises to the cytoplasm. The enzyme catalyses tRNA(Glu) + L-glutamate + ATP = L-glutamyl-tRNA(Glu) + AMP + diphosphate. Its function is as follows. Catalyzes the attachment of glutamate to tRNA(Glu) in a two-step reaction: glutamate is first activated by ATP to form Glu-AMP and then transferred to the acceptor end of tRNA(Glu). The chain is Glutamate--tRNA ligase from Streptococcus pneumoniae (strain CGSP14).